Here is a 513-residue protein sequence, read N- to C-terminus: Protein disulfide-isomerase (513 aa).

The signal sequence occupies residues 1 to 25 (MAISKVWISLLLALAVVLSAPAARA). A Thioredoxin 1 domain is found at 26–149 (EEAAAAEEAA…IVEYLKKQVG (124 aa)). Catalysis depends on nucleophile residues cysteine 67 and cysteine 70. Residues cysteine 67 and cysteine 70 are joined by a disulfide bond. N-linked (GlcNAc...) asparagine glycosylation occurs at asparagine 282. The Thioredoxin 2 domain occupies 369–488 (FRKSEPIPEA…IVDYIRKNKE (120 aa)). Residues cysteine 411 and cysteine 414 each act as nucleophile in the active site. Cysteine 411 and cysteine 414 are oxidised to a cystine. Residues 491–507 (GQAAAATEKAAEPAATE) show a composition bias toward low complexity. A disordered region spans residues 491–513 (GQAAAATEKAAEPAATEPLKDEL). The Prevents secretion from ER motif lies at 510 to 513 (KDEL).

The protein belongs to the protein disulfide isomerase family.

Its subcellular location is the endoplasmic reticulum lumen. The catalysed reaction is Catalyzes the rearrangement of -S-S- bonds in proteins.. In terms of biological role, participates in the folding of proteins containing disulfide bonds, may be involved in glycosylation, prolyl hydroxylation and triglyceride transfer. The protein is Protein disulfide-isomerase (PDI) of Hordeum vulgare (Barley).